Reading from the N-terminus, the 421-residue chain is UPF0415 protein C7orf25 homolog (421 aa).

This sequence belongs to the UPF0415 family.

This Bos taurus (Bovine) protein is UPF0415 protein C7orf25 homolog.